Here is a 445-residue protein sequence, read N- to C-terminus: Tripartite motif-containing protein 43B (445 aa).

An RING-type zinc finger spans residues 16–57; it reads CSICQGIFMNPVYLKCGHKFCEACLLLFQEDIKFPAYCPMCM. A B box-type zinc finger spans residues 88-129; it reads SEEHKCVTHKAKKMIFCDKSKILLCHLCSDSQEHSGHTHCSI. Zn(2+) contacts are provided by Cys93, His96, Cys115, and His121. Residues 271–445 form the B30.2/SPRY domain; it reads RLRAHSIPGL…VRPFFSAVYT (175 aa).

This sequence belongs to the TRIM/RBCC family.

In Mus musculus (Mouse), this protein is Tripartite motif-containing protein 43B.